The sequence spans 195 residues: N-(5'-phosphoribosyl)anthranilate isomerase (195 aa).

This sequence belongs to the TrpF family.

The catalysed reaction is N-(5-phospho-beta-D-ribosyl)anthranilate = 1-(2-carboxyphenylamino)-1-deoxy-D-ribulose 5-phosphate. The protein operates within amino-acid biosynthesis; L-tryptophan biosynthesis; L-tryptophan from chorismate: step 3/5. The sequence is that of N-(5'-phosphoribosyl)anthranilate isomerase from Streptococcus gordonii (strain Challis / ATCC 35105 / BCRC 15272 / CH1 / DL1 / V288).